The primary structure comprises 575 residues: Acyloxyacyl hydrolase (575 aa).

Residues 1–25 (MKSPWRILVVSPLLLLPLHSSTSRA) form the signal peptide. A propeptide spanning residues 26–34 (HDNQPGTIR) is cleaved from the precursor. The region spanning 36–117 (DHYTCVGCVL…HTLEFCKQEP (82 aa)) is the Saposin B-type domain. The important for enzyme activity, localization to cytoplasmic vesicles, and protein stability stretch occupies residues 37–69 (HYTCVGCVLVVSVIEQLAQVHNSTVQASMERLC). 8 cysteine pairs are disulfide-bonded: cysteine 40–cysteine 113, cysteine 43–cysteine 107, cysteine 69–cysteine 82, cysteine 122–cysteine 453, cysteine 159–cysteine 168, cysteine 205–cysteine 229, cysteine 248–cysteine 328, and cysteine 375–cysteine 459. Residue asparagine 58 is glycosylated (N-linked (GlcNAc...) asparagine). A lipopolysaccharide binding region spans residues 172-176 (KLAIK). Ca(2+)-binding residues include aspartate 183, aspartate 185, aspartate 187, tyrosine 189, aspartate 204, asparagine 206, aspartate 207, aspartate 209, valine 212, aspartate 222, aspartate 226, asparagine 228, asparagine 230, isoleucine 232, and glutamate 244. N-linked (GlcNAc...) asparagine glycosylation is present at asparagine 206. Serine 262 is a catalytic residue. N-linked (GlcNAc...) asparagine glycosylation is present at asparagine 466.

In terms of assembly, heterodimer of the large and small subunits; disulfide-linked. Ca(2+) serves as cofactor. Cleaved into a large and a small subunit. In terms of processing, the small subunit is N-glycosylated.

It is found in the secreted. The protein localises to the cytoplasmic vesicle. The enzyme catalyses a 3-(acyloxy)acyl derivative of bacterial toxin + H2O = a 3-hydroxyacyl derivative of bacterial toxin + a fatty acid + H(+). Functionally, removes the secondary (acyloxyacyl-linked) fatty acyl chains from the lipid A region of bacterial lipopolysaccharides (LPS). By breaking down LPS, terminates the host response to bacterial infection and prevents prolonged and damaging inflammatory responses. In peritoneal macrophages, seems to be important for recovery from a state of immune tolerance following infection by Gram-negative bacteria. The sequence is that of Acyloxyacyl hydrolase from Oryctolagus cuniculus (Rabbit).